A 250-amino-acid polypeptide reads, in one-letter code: Hydroxyacylglutathione hydrolase (250 aa).

Residues histidine 52, histidine 54, aspartate 56, histidine 57, histidine 107, aspartate 128, and histidine 166 each contribute to the Zn(2+) site.

Belongs to the metallo-beta-lactamase superfamily. Glyoxalase II family. In terms of assembly, monomer. The cofactor is Zn(2+).

It carries out the reaction an S-(2-hydroxyacyl)glutathione + H2O = a 2-hydroxy carboxylate + glutathione + H(+). It participates in secondary metabolite metabolism; methylglyoxal degradation; (R)-lactate from methylglyoxal: step 2/2. In terms of biological role, thiolesterase that catalyzes the hydrolysis of S-D-lactoyl-glutathione to form glutathione and D-lactic acid. The protein is Hydroxyacylglutathione hydrolase of Neisseria meningitidis serogroup A / serotype 4A (strain DSM 15465 / Z2491).